Consider the following 293-residue polypeptide: Ribosomal RNA small subunit methyltransferase H (293 aa).

S-adenosyl-L-methionine-binding positions include 32–34 (GGH), Asp51, Phe78, Asp99, and Gln106. Residues 274-293 (DEIRENPASRSAKMRVARRL) are disordered.

It belongs to the methyltransferase superfamily. RsmH family.

The protein resides in the cytoplasm. It carries out the reaction cytidine(1402) in 16S rRNA + S-adenosyl-L-methionine = N(4)-methylcytidine(1402) in 16S rRNA + S-adenosyl-L-homocysteine + H(+). Specifically methylates the N4 position of cytidine in position 1402 (C1402) of 16S rRNA. The protein is Ribosomal RNA small subunit methyltransferase H of Sulfurihydrogenibium azorense (strain DSM 15241 / OCM 825 / Az-Fu1).